The sequence spans 501 residues: Dipeptide and tripeptide permease A (501 aa).

The Cytoplasmic segment spans residues 1–34; sequence MSTANNKPTESVSLNAFKQPKSFYLIFSIELWER. The helical transmembrane segment at 35-55 threads the bilayer; the sequence is FGYYGLQGIMAVYLVKQLGMS. The Periplasmic portion of the chain corresponds to 56–59; the sequence is EADS. Residues 60–80 traverse the membrane as a helical segment; sequence ITLFSSFSALVYGLVAIGGWL. Topologically, residues 81-89 are cytoplasmic; it reads GDKVLGTKR. A helical membrane pass occupies residues 90–110; that stretch reads VIMLGAIVLAIGYGLVAWSGH. A topological domain (periplasmic) is located at residue D111. The helical transmembrane segment at 112-132 threads the bilayer; it reads VAIVYMGMATIAVGNGLFKAN. Residues 133 to 153 lie on the Cytoplasmic side of the membrane; the sequence is PSSLLSTCYAKDDPRLDGAFT. A helical transmembrane segment spans residues 154-174; the sequence is MYYMSINIGSFFSMLATPWLA. The Periplasmic segment spans residues 175–178; that stretch reads AKFG. A helical membrane pass occupies residues 179–199; it reads WSVAFALSFVGMLITVVNFLF. The Cytoplasmic segment spans residues 200 to 217; sequence CRSWVKDYGSKPDFEAVH. A helical transmembrane segment spans residues 218-238; it reads FGKLLATIAGVIVLIAIATWL. Over 239–246 the chain is Periplasmic; the sequence is LHNQGIAR. A helical membrane pass occupies residues 247-267; it reads MVLGVIALGIVIIFGKEAFAM. At 268 to 274 the chain is on the cytoplasmic side; the sequence is QGAARRK. The helical transmembrane segment at 275–295 threads the bilayer; the sequence is MIVAFILMLEAIIFFVLYSQM. Residues 296-320 lie on the Periplasmic side of the membrane; sequence PTSLNFFAIRNVEHTILGIAVEPEQ. Residues 321 to 341 form a helical membrane-spanning segment; sequence YQALNPFWIIIGSPILAAIYN. Residues 342 to 352 are Cytoplasmic-facing; the sequence is KMGDTLPMPTK. The helical transmembrane segment at 353–373 threads the bilayer; the sequence is FAIGMVLCSGAFLVLPLGAKF. At 374–383 the chain is on the periplasmic side; that stretch reads ATDAGIVSVN. A helical transmembrane segment spans residues 384-404; the sequence is WLILSYGLQSIGELMISGLGL. The Cytoplasmic portion of the chain corresponds to 405–414; it reads AMVAQLVPQR. The helical transmembrane segment at 415–435 threads the bilayer; sequence LMGFIMGSWFLTTAGANLIGG. Topologically, residues 436–459 are periplasmic; the sequence is YVAGMMAVPENVTDPLMSLEVYGR. Residues 460 to 480 traverse the membrane as a helical segment; the sequence is VFLQIGVATAVIAALMLITAP. The Cytoplasmic portion of the chain corresponds to 481-501; that stretch reads KLNRMTQDDEENAKAAKTATA.

This sequence belongs to the major facilitator superfamily. Proton-dependent oligopeptide transporter (POT/PTR) (TC 2.A.17) family. DtpA subfamily.

Its subcellular location is the cell inner membrane. Its function is as follows. Proton-dependent permease that transports di- and tripeptides. This chain is Dipeptide and tripeptide permease A, found in Citrobacter koseri (strain ATCC BAA-895 / CDC 4225-83 / SGSC4696).